The primary structure comprises 468 residues: MEDEEEEARALLPGGSDEAGRETRAPPAASGALQALCDPSHLAHRLVVLLLMCFLGFGSYFCYDNPAALQIQVKRDMQVNTTKFMLLYAWYSWPNVVLCFFGGFLIDRVFGIRWGTIIFSCFVCIGQVVFALGGIFNAFWLMELGRFVFGIGGESLAVAQNTYAVSWFKGKELNLVFGLQLSMARIGSTVNMNLMGWLYSKVEASLGSAGHTTLGVTLMIGGITCILSLVCALALAYLDQRAERILHKEQGKTGEVIKLTDVKDFSLPLWLIFIICVCYYVAIFPFIGLVKVFFTEKFGFSSQAASAINSVVYVISAPMSPIFGLLVDKTGKNIIWVLCAVVTTLASHIMLAFTLWNPWIAMCLLGLSYSLLACALWPMVAFVVPEHQLGTAYGFMQSIQNLGLAVISIIAGMILDTRGYLFLEVFFIACVSLSLLSVVLLYMVNHAQGGNLNYSAKKREEMKLSHEE.

A disordered region spans residues 1 to 25 (MEDEEEEARALLPGGSDEAGRETRA). Positions 11 to 12 (LL) match the Dileucine internalization motif motif. A run of 12 helical transmembrane segments spans residues 42–62 (LAHR…SYFC), 86–106 (LLYA…GFLI), 116–136 (TIIF…GGIF), 138–158 (AFWL…SLAV), 173–194 (LNLV…NMNL), 218–238 (LMIG…LAYL), 270–290 (WLIF…IGLV), 307–327 (AINS…GLLV), 334–354 (IIWV…LAFT), 364–384 (LLGL…AFVV), 395–415 (FMQS…GMIL), and 421–441 (LFLE…VVLL).

Belongs to the major facilitator superfamily. In terms of assembly, homodimer. Interacts with lysosomal protein GLMP (via lumenal domain); the interaction starts while both proteins are still in the endoplasmic reticulum and is required for stabilization of MFSD1 in lysosomes but has no direct effect on its targeting to lysosomes or transporter activity.

The protein localises to the lysosome membrane. The enzyme catalyses L-alpha-aminoacyl-L-arginine(out) = L-alpha-aminoacyl-L-arginine(in). It carries out the reaction L-arginyl-L-alpha-amino acid(out) = L-arginyl-L-alpha-amino acid(in). It catalyses the reaction L-arginyl-glycine(out) = L-arginyl-glycine(in). The catalysed reaction is L-alpha-aminoacyl-L-lysine(out) = L-alpha-aminoacyl-L-lysine(in). The enzyme catalyses L-aspartyl-L-lysine(out) = L-aspartyl-L-lysine(in). It carries out the reaction L-alanyl-L-lysine(out) = L-alanyl-L-lysine(in). It catalyses the reaction L-lysyl-L-alpha-amino acid(out) = L-lysyl-L-alpha-amino acid(in). The catalysed reaction is L-lysyl-L-alanine(out) = L-lysyl-L-alanine(in). The enzyme catalyses L-lysyl-L-lysine(out) = L-lysyl-L-lysine(in). It carries out the reaction L-lysyl-glycine(out) = L-lysyl-glycine(in). It catalyses the reaction L-alpha-aminoacyl-L-histidine(out) = L-alpha-aminoacyl-L-histidine(in). The catalysed reaction is L-histidyl-L-alpha-amino acid(out) = L-histidyl-L-alpha-amino acid(in). The enzyme catalyses L-histidyl-glycine(out) = L-histidyl-glycine(in). In terms of biological role, lysosomal dipeptide uniporter that selectively exports lysine, arginine or histidine-containing dipeptides with a net positive charge from the lysosome lumen into the cytosol. Could play a role in a specific type of protein O-glycosylation indirectly regulating macrophages migration and tissue invasion. Also essential for liver homeostasis. The chain is Lysosomal dipeptide transporter MFSD1 from Bos taurus (Bovine).